The following is a 171-amino-acid chain: Crossover junction endodeoxyribonuclease RuvC (171 aa).

Residues aspartate 7, glutamate 66, and aspartate 138 contribute to the active site. 3 residues coordinate Mg(2+): aspartate 7, glutamate 66, and aspartate 138.

This sequence belongs to the RuvC family. As to quaternary structure, homodimer which binds Holliday junction (HJ) DNA. The HJ becomes 2-fold symmetrical on binding to RuvC with unstacked arms; it has a different conformation from HJ DNA in complex with RuvA. In the full resolvosome a probable DNA-RuvA(4)-RuvB(12)-RuvC(2) complex forms which resolves the HJ. Mg(2+) serves as cofactor.

It localises to the cytoplasm. The enzyme catalyses Endonucleolytic cleavage at a junction such as a reciprocal single-stranded crossover between two homologous DNA duplexes (Holliday junction).. Its function is as follows. The RuvA-RuvB-RuvC complex processes Holliday junction (HJ) DNA during genetic recombination and DNA repair. Endonuclease that resolves HJ intermediates. Cleaves cruciform DNA by making single-stranded nicks across the HJ at symmetrical positions within the homologous arms, yielding a 5'-phosphate and a 3'-hydroxyl group; requires a central core of homology in the junction. The consensus cleavage sequence is 5'-(A/T)TT(C/G)-3'. Cleavage occurs on the 3'-side of the TT dinucleotide at the point of strand exchange. HJ branch migration catalyzed by RuvA-RuvB allows RuvC to scan DNA until it finds its consensus sequence, where it cleaves and resolves the cruciform DNA. The chain is Crossover junction endodeoxyribonuclease RuvC from Francisella tularensis subsp. mediasiatica (strain FSC147).